We begin with the raw amino-acid sequence, 404 residues long: Cysteine desulfurase IscS (404 aa).

Pyridoxal 5'-phosphate contacts are provided by residues 75 to 76 (AT), Asn-155, Gln-183, and 203 to 205 (SGH). An N6-(pyridoxal phosphate)lysine modification is found at Lys-206. Residue Thr-243 participates in pyridoxal 5'-phosphate binding. Catalysis depends on Cys-328, which acts as the Cysteine persulfide intermediate. Cys-328 is a binding site for [2Fe-2S] cluster.

It belongs to the class-V pyridoxal-phosphate-dependent aminotransferase family. NifS/IscS subfamily. As to quaternary structure, homodimer. Forms a heterotetramer with IscU, interacts with other sulfur acceptors. Pyridoxal 5'-phosphate is required as a cofactor.

The protein resides in the cytoplasm. The catalysed reaction is (sulfur carrier)-H + L-cysteine = (sulfur carrier)-SH + L-alanine. The protein operates within cofactor biosynthesis; iron-sulfur cluster biosynthesis. In terms of biological role, master enzyme that delivers sulfur to a number of partners involved in Fe-S cluster assembly, tRNA modification or cofactor biosynthesis. Catalyzes the removal of elemental sulfur and selenium atoms from cysteine and selenocysteine to produce alanine. Functions as a sulfur delivery protein for Fe-S cluster synthesis onto IscU, an Fe-S scaffold assembly protein, as well as other S acceptor proteins. Also functions as a selenium delivery protein in the pathway for the biosynthesis of selenophosphate. In Salmonella paratyphi C (strain RKS4594), this protein is Cysteine desulfurase IscS.